Here is a 115-residue protein sequence, read N- to C-terminus: MKFVLLFGVFLVTLFSYSSAEMLDDFDQADEDELLSLIEKEEARAKECTPRFYDCSHDRHSCCRSELFKDVCTCFYPEGGDNEVCTCQQPKHLKYMEKAADKAKKFGGKIKKWFG.

Residues 1–20 (MKFVLLFGVFLVTLFSYSSA) form the signal peptide. Positions 21-44 (EMLDDFDQADEDELLSLIEKEEAR) are excised as a propeptide. Cystine bridges form between Cys-48-Cys-63, Cys-55-Cys-72, Cys-62-Cys-87, and Cys-74-Cys-85.

It belongs to the neurotoxin 19 (CSTX) family. 01 subfamily. As to expression, expressed by the venom gland.

Its subcellular location is the secreted. This is U3-lycotoxin-Ls1a from Lycosa singoriensis (Wolf spider).